Reading from the N-terminus, the 363-residue chain is NAD(P)H-quinone oxidoreductase subunit 1, chloroplastic (363 aa).

6 helical membrane passes run 30-50 (LVPILTLVLGITIGVLVIVWL), 98-118 (FSIGPAIAVISILLSFSVIPF), 129-149 (IGIFLWIAISSIAPVGLLMSG), 248-268 (YSGIKFGLFYVASYLNLLLSS), 300-320 (IIGTTIGIFITLAKTYLFLFI), and 343-363 (FLLPISLGNLLLTTSFQLLSL).

Belongs to the complex I subunit 1 family. As to quaternary structure, NDH is composed of at least 16 different subunits, 5 of which are encoded in the nucleus.

It is found in the plastid. Its subcellular location is the chloroplast thylakoid membrane. The enzyme catalyses a plastoquinone + NADH + (n+1) H(+)(in) = a plastoquinol + NAD(+) + n H(+)(out). It catalyses the reaction a plastoquinone + NADPH + (n+1) H(+)(in) = a plastoquinol + NADP(+) + n H(+)(out). Its function is as follows. NDH shuttles electrons from NAD(P)H:plastoquinone, via FMN and iron-sulfur (Fe-S) centers, to quinones in the photosynthetic chain and possibly in a chloroplast respiratory chain. The immediate electron acceptor for the enzyme in this species is believed to be plastoquinone. Couples the redox reaction to proton translocation, and thus conserves the redox energy in a proton gradient. The polypeptide is NAD(P)H-quinone oxidoreductase subunit 1, chloroplastic (Gossypium barbadense (Sea Island cotton)).